The primary structure comprises 337 residues: 4-hydroxythreonine-4-phosphate dehydrogenase (337 aa).

Residues His-137 and Thr-138 each contribute to the substrate site. 3 residues coordinate a divalent metal cation: His-167, His-212, and His-267. Substrate-binding residues include Lys-275, Asn-284, and Arg-293.

The protein belongs to the PdxA family. In terms of assembly, homodimer. It depends on Zn(2+) as a cofactor. The cofactor is Mg(2+). Co(2+) serves as cofactor.

It localises to the cytoplasm. The catalysed reaction is 4-(phosphooxy)-L-threonine + NAD(+) = 3-amino-2-oxopropyl phosphate + CO2 + NADH. It participates in cofactor biosynthesis; pyridoxine 5'-phosphate biosynthesis; pyridoxine 5'-phosphate from D-erythrose 4-phosphate: step 4/5. Functionally, catalyzes the NAD(P)-dependent oxidation of 4-(phosphooxy)-L-threonine (HTP) into 2-amino-3-oxo-4-(phosphooxy)butyric acid which spontaneously decarboxylates to form 3-amino-2-oxopropyl phosphate (AHAP). In Ectopseudomonas mendocina (strain ymp) (Pseudomonas mendocina), this protein is 4-hydroxythreonine-4-phosphate dehydrogenase.